A 252-amino-acid polypeptide reads, in one-letter code: Chitooligosaccharide deacetylase (252 aa).

Mg(2+)-binding residues include His-61 and His-125.

The protein belongs to the YdjC deacetylase family. ChbG subfamily. In terms of assembly, homodimer. Requires Mg(2+) as cofactor.

The protein resides in the cytoplasm. It carries out the reaction N,N'-diacetylchitobiose + H2O = N-acetyl-beta-D-glucosaminyl-(1-&gt;4)-D-glucosamine + acetate. The enzyme catalyses diacetylchitobiose-6'-phosphate + H2O = N'-monoacetylchitobiose-6'-phosphate + acetate. It participates in glycan degradation; chitin degradation. Its function is as follows. Involved in the degradation of chitin. ChbG is essential for growth on the acetylated chitooligosaccharides chitobiose and chitotriose but is dispensable for growth on cellobiose and chitosan dimer, the deacetylated form of chitobiose. Deacetylation of chitobiose-6-P and chitotriose-6-P is necessary for both the activation of the chb promoter by the regulatory protein ChbR and the hydrolysis of phosphorylated beta-glucosides by the phospho-beta-glucosidase ChbF. Catalyzes the removal of only one acetyl group from chitobiose-6-P to yield monoacetylchitobiose-6-P, the inducer of ChbR and the substrate of ChbF. The chain is Chitooligosaccharide deacetylase from Enterobacter sp. (strain 638).